A 595-amino-acid chain; its full sequence is Aspartate--tRNA(Asp/Asn) ligase (595 aa).

Position 175 (Glu-175) interacts with L-aspartate. The aspartate stretch occupies residues 199 to 202; sequence QQYK. Positions 221 and 454 each coordinate L-aspartate. An ATP-binding site is contributed by 221–223; the sequence is RDE. Glu-488 is a binding site for ATP. Arg-495 serves as a coordination point for L-aspartate. 540–543 provides a ligand contact to ATP; sequence GIDR.

Belongs to the class-II aminoacyl-tRNA synthetase family. Type 1 subfamily. Homodimer.

The protein localises to the cytoplasm. It carries out the reaction tRNA(Asx) + L-aspartate + ATP = L-aspartyl-tRNA(Asx) + AMP + diphosphate. In terms of biological role, aspartyl-tRNA synthetase with relaxed tRNA specificity since it is able to aspartylate not only its cognate tRNA(Asp) but also tRNA(Asn). Reaction proceeds in two steps: L-aspartate is first activated by ATP to form Asp-AMP and then transferred to the acceptor end of tRNA(Asp/Asn). This Agrobacterium fabrum (strain C58 / ATCC 33970) (Agrobacterium tumefaciens (strain C58)) protein is Aspartate--tRNA(Asp/Asn) ligase.